Reading from the N-terminus, the 666-residue chain is DNA ligase (666 aa).

Residues 31 to 35 (DKEFD), 80 to 81 (SL), and Glu-110 contribute to the NAD(+) site. The N6-AMP-lysine intermediate role is filled by Lys-112. NAD(+) contacts are provided by Arg-133, Glu-170, Lys-285, and Lys-309. The Zn(2+) site is built by Cys-404, Cys-407, Cys-422, and Cys-428. Residues 588-666 (GYTDKLAGQS…SEDEFLKLIS (79 aa)) form the BRCT domain.

It belongs to the NAD-dependent DNA ligase family. LigA subfamily. Mg(2+) is required as a cofactor. The cofactor is Mn(2+).

The enzyme catalyses NAD(+) + (deoxyribonucleotide)n-3'-hydroxyl + 5'-phospho-(deoxyribonucleotide)m = (deoxyribonucleotide)n+m + AMP + beta-nicotinamide D-nucleotide.. Functionally, DNA ligase that catalyzes the formation of phosphodiester linkages between 5'-phosphoryl and 3'-hydroxyl groups in double-stranded DNA using NAD as a coenzyme and as the energy source for the reaction. It is essential for DNA replication and repair of damaged DNA. In Bacteroides thetaiotaomicron (strain ATCC 29148 / DSM 2079 / JCM 5827 / CCUG 10774 / NCTC 10582 / VPI-5482 / E50), this protein is DNA ligase.